We begin with the raw amino-acid sequence, 545 residues long: Capsular polysaccharide phosphotransferase SacB (545 aa).

The protein belongs to the stealth family.

Its function is as follows. May be the polymerase that links individual UDP-N-acetyl-D-mannosamine monomers. In serotype A the capsule is composed of repeated units of (alpha 1-6)-linked N-acetyl-D-mannosamine-1-phosphate. The chain is Capsular polysaccharide phosphotransferase SacB (sacB) from Neisseria meningitidis serogroup A.